The following is a 507-amino-acid chain: Protein FAM221B (507 aa).

Disordered stretches follow at residues 1–100, 154–310, and 486–507; these read MEAD…SAQS, LLSP…ESRP, and ETKR…HRPF. Residues 88-100 show a composition bias toward polar residues; it reads NLPSTPSQSSAQS. Over residues 167-177 the composition is skewed to acidic residues; it reads SISDVQEEPLE. Over residues 182–193 the composition is skewed to polar residues; sequence ADISETEYSISD. Acidic residues-rich tracts occupy residues 208-222 and 270-281; these read PESE…EEPL and SADEEEAEEEEL. Ser-270 bears the Phosphoserine mark.

Belongs to the FAM221 family.

This is Protein FAM221B (Fam221b) from Rattus norvegicus (Rat).